Here is a 450-residue protein sequence, read N- to C-terminus: Tubulin alpha chain (450 aa).

Positions 11, 71, 140, 144, 145, 179, 206, and 228 each coordinate GTP. Glu-71 is a binding site for Mg(2+). Residue Glu-254 is part of the active site.

It belongs to the tubulin family. As to quaternary structure, dimer of alpha and beta chains. A typical microtubule is a hollow water-filled tube with an outer diameter of 25 nm and an inner diameter of 15 nM. Alpha-beta heterodimers associate head-to-tail to form protofilaments running lengthwise along the microtubule wall with the beta-tubulin subunit facing the microtubule plus end conferring a structural polarity. Microtubules usually have 13 protofilaments but different protofilament numbers can be found in some organisms and specialized cells. Requires Mg(2+) as cofactor.

It is found in the cytoplasm. It localises to the cytoskeleton. It carries out the reaction GTP + H2O = GDP + phosphate + H(+). Functionally, tubulin is the major constituent of microtubules, a cylinder consisting of laterally associated linear protofilaments composed of alpha- and beta-tubulin heterodimers. Microtubules grow by the addition of GTP-tubulin dimers to the microtubule end, where a stabilizing cap forms. Below the cap, tubulin dimers are in GDP-bound state, owing to GTPase activity of alpha-tubulin. In Zymoseptoria tritici (Speckled leaf blotch fungus), this protein is Tubulin alpha chain.